A 409-amino-acid polypeptide reads, in one-letter code: uncharacterized protein (409 aa).

A signal peptide spans 1 to 26; that stretch reads MKKELLASLVLCLSLSPLVSTNEVFA.

This is an uncharacterized protein from Bacillus subtilis (strain 168).